A 440-amino-acid polypeptide reads, in one-letter code: MAMLPQEIIRKKRDGDRLDPAEIAGFIAGVTDGSVSEGQAAAFAMAVWFSGMNRDECVALTLAMRDSGETLDWSDLARPIVDKHSTGGVGDNVSLMLAPIVAACGAAVPMISGRGLGHTGGTLDKLESIPGYDIQPSPELFRRVADEVGCAIIGQTADLAPADKRLYAIRDVTATVDSVPLITASILSKKLAAGLRSLVLDVKLGNGSFMTDPAETEVLARSLVEVANGAGVRTSALITDMNEPLADAAGNALEIENCLAYLRGEKAGTRLDQVVMALAAEMLVAAGIAAHEAEAEAMARRVLGSGEAMERFGLMVHRLGGPADFVDRPGAYLAKAPAILAVPAGRHGYLTSCKTRELGMAVIELGGGRIRPDDRIDHRVGLTGLRPLGTKVEKGEPIAFVHAADQSQAEAIAKRVVTLYAIADEEPARRPVIVSKLRAG.

Belongs to the thymidine/pyrimidine-nucleoside phosphorylase family. Homodimer.

It carries out the reaction thymidine + phosphate = 2-deoxy-alpha-D-ribose 1-phosphate + thymine. Its pathway is pyrimidine metabolism; dTMP biosynthesis via salvage pathway; dTMP from thymine: step 1/2. In terms of biological role, the enzymes which catalyze the reversible phosphorolysis of pyrimidine nucleosides are involved in the degradation of these compounds and in their utilization as carbon and energy sources, or in the rescue of pyrimidine bases for nucleotide synthesis. The polypeptide is Thymidine phosphorylase (Rhizobium meliloti (strain 1021) (Ensifer meliloti)).